An 854-amino-acid polypeptide reads, in one-letter code: uncharacterized protein (854 aa).

This sequence belongs to the PEP-utilizing enzyme family.

This is an uncharacterized protein from Mycobacterium tuberculosis (strain CDC 1551 / Oshkosh).